A 212-amino-acid polypeptide reads, in one-letter code: ATP-dependent dethiobiotin synthetase BioD (212 aa).

Position 12 to 17 (12 to 17 (DCGKTF)) interacts with ATP. Thr-16 provides a ligand contact to Mg(2+). Residue Lys-33 is part of the active site. Residue Ser-37 participates in substrate binding. ATP contacts are provided by residues Asp-50, 110-113 (EGAG), and 170-171 (NC). Residues Asp-50 and Glu-110 each contribute to the Mg(2+) site.

The protein belongs to the dethiobiotin synthetase family. Homodimer. It depends on Mg(2+) as a cofactor.

The protein localises to the cytoplasm. It catalyses the reaction (7R,8S)-7,8-diammoniononanoate + CO2 + ATP = (4R,5S)-dethiobiotin + ADP + phosphate + 3 H(+). It participates in cofactor biosynthesis; biotin biosynthesis; biotin from 7,8-diaminononanoate: step 1/2. Catalyzes a mechanistically unusual reaction, the ATP-dependent insertion of CO2 between the N7 and N8 nitrogen atoms of 7,8-diaminopelargonic acid (DAPA, also called 7,8-diammoniononanoate) to form a ureido ring. This chain is ATP-dependent dethiobiotin synthetase BioD, found in Legionella pneumophila (strain Paris).